The following is a 692-amino-acid chain: Paramyosin (692 aa).

The segment at 1 to 15 (MNKKRDSELAKLRKL) is nonhelical region. The stretch at 16–692 (LEDVHIESEE…DHRVKELLLQ (677 aa)) forms a coiled coil. The interval 26 to 57 (TAHHLRQKHQAAIQEMQDQLDQLQKAKNKSDK) is disordered.

The protein belongs to the paramyosin family. Homodimer.

It is found in the cytoplasm. The protein resides in the myofibril. Paramyosin is a major structural component of many thick filaments isolated from invertebrate muscles. The polypeptide is Paramyosin (Dermatophagoides farinae (American house dust mite)).